Consider the following 85-residue polypeptide: MKRNQRKQLIGTVVSTKNAKTATVKVTSRFKHPLYHKSVIRHKKYHVHNFGELVANDGDRVQIIETRPLSALKRWRIVKIIERAK.

It belongs to the universal ribosomal protein uS17 family. Part of the 30S ribosomal subunit.

Its function is as follows. One of the primary rRNA binding proteins, it binds specifically to the 5'-end of 16S ribosomal RNA. This Mycoplasma genitalium (strain ATCC 33530 / DSM 19775 / NCTC 10195 / G37) (Mycoplasmoides genitalium) protein is Small ribosomal subunit protein uS17.